Here is a 260-residue protein sequence, read N- to C-terminus: Probable 6-oxopurine nucleoside phosphorylase (260 aa).

Phosphate contacts are provided by residues Ser-9 and 49 to 50 (RH). Substrate is bound at residue Met-182. Thr-183 lines the phosphate pocket. Position 206–208 (206–208 (NMA)) interacts with substrate.

Belongs to the PNP/MTAP phosphorylase family. MTAP subfamily. Homohexamer. Dimer of a homotrimer.

The enzyme catalyses a purine D-ribonucleoside + phosphate = a purine nucleobase + alpha-D-ribose 1-phosphate. It functions in the pathway purine metabolism; purine nucleoside salvage. Functionally, purine nucleoside phosphorylase which is highly specific for 6-oxopurine nucleosides. Cleaves guanosine or inosine to respective bases and sugar-1-phosphate molecules. Involved in purine salvage. This is Probable 6-oxopurine nucleoside phosphorylase from Moorella thermoacetica (strain ATCC 39073 / JCM 9320).